The primary structure comprises 192 residues: Nucleoside triphosphate pyrophosphatase (192 aa).

D73 (proton acceptor) is an active-site residue.

The protein belongs to the Maf family. It depends on a divalent metal cation as a cofactor.

The protein localises to the cytoplasm. It carries out the reaction a ribonucleoside 5'-triphosphate + H2O = a ribonucleoside 5'-phosphate + diphosphate + H(+). It catalyses the reaction a 2'-deoxyribonucleoside 5'-triphosphate + H2O = a 2'-deoxyribonucleoside 5'-phosphate + diphosphate + H(+). Nucleoside triphosphate pyrophosphatase. May have a dual role in cell division arrest and in preventing the incorporation of modified nucleotides into cellular nucleic acids. The chain is Nucleoside triphosphate pyrophosphatase from Ehrlichia chaffeensis (strain ATCC CRL-10679 / Arkansas).